The chain runs to 424 residues: MLDIKFLRTNFEEVKAKLQHRGEDLTDFGRFEELDTRRRELLVQTEELKSKRNEVSQQISVLKREKKDAEALILEMREVGEKVKDLDNELRTVEEDLERLMLSIPNIPHESAPVGETEDDNVVARTWGEVKEFAFEPKPHWDLATDLGILDFERAGKVTGSRFVFYKGAGARLERALISFMLDLHTDEHGYEEVLPPYMVNRASMTGTGQLPKFEEDAFRIESEDYFLIPTAEVPVTNMHRDEILNKDQLPIRYAAFSSCFRSEAGSAGRDTRGLIRQHQFNKVELVKFVKPEDSYEELEKLTNDAERVLQLLELPYRVMSMCTGDLGFTAAKKYDIEVWIPSYGTYREISSCSNFEAFQARRANIRFRREPNGKPEHVHTLNGSGLAIGRTVAAILENYQQEDGTIIIPEVLRPYMGGKTVIK.

Threonine 231–glutamate 233 is an L-serine binding site. Position 262 to 264 (arginine 262 to glutamate 264) interacts with ATP. Residue glutamate 285 coordinates L-serine. Glutamate 349–serine 352 lines the ATP pocket. Position 385 (serine 385) interacts with L-serine.

Belongs to the class-II aminoacyl-tRNA synthetase family. Type-1 seryl-tRNA synthetase subfamily. Homodimer. The tRNA molecule binds across the dimer.

Its subcellular location is the cytoplasm. It carries out the reaction tRNA(Ser) + L-serine + ATP = L-seryl-tRNA(Ser) + AMP + diphosphate + H(+). The catalysed reaction is tRNA(Sec) + L-serine + ATP = L-seryl-tRNA(Sec) + AMP + diphosphate + H(+). It functions in the pathway aminoacyl-tRNA biosynthesis; selenocysteinyl-tRNA(Sec) biosynthesis; L-seryl-tRNA(Sec) from L-serine and tRNA(Sec): step 1/1. Its function is as follows. Catalyzes the attachment of serine to tRNA(Ser). Is also able to aminoacylate tRNA(Sec) with serine, to form the misacylated tRNA L-seryl-tRNA(Sec), which will be further converted into selenocysteinyl-tRNA(Sec). The sequence is that of Serine--tRNA ligase from Bacillus cereus (strain AH187).